Reading from the N-terminus, the 224-residue chain is Cytidylate kinase (224 aa).

ATP is bound at residue 11–19 (GPAAAGKST).

The protein belongs to the cytidylate kinase family. Type 1 subfamily.

It localises to the cytoplasm. The enzyme catalyses CMP + ATP = CDP + ADP. It carries out the reaction dCMP + ATP = dCDP + ADP. The protein is Cytidylate kinase of Geobacillus sp. (strain WCH70).